Consider the following 301-residue polypeptide: Structure-specific endonuclease subunit SLX1 (301 aa).

The GIY-YIG domain occupies 12-95 (AFYCCYLLRS…QHPYQTRFIK (84 aa)). An SLX1-type zinc finger spans residues 216–283 (CAICEKIVDY…IPTSGQCPNC (68 aa)).

Belongs to the SLX1 family. In terms of assembly, forms a heterodimer with SLX4. A divalent metal cation serves as cofactor.

Its subcellular location is the nucleus. Its function is as follows. Catalytic subunit of the SLX1-SLX4 structure-specific endonuclease that resolves DNA secondary structures generated during DNA repair and recombination. Has endonuclease activity towards branched DNA substrates, introducing single-strand cuts in duplex DNA close to junctions with ss-DNA. This Eremothecium gossypii (strain ATCC 10895 / CBS 109.51 / FGSC 9923 / NRRL Y-1056) (Yeast) protein is Structure-specific endonuclease subunit SLX1.